The chain runs to 462 residues: uncharacterized protein (462 aa).

The 69-residue stretch at 22–90 folds into the HTH gntR-type domain; the sequence is KPIYKALAGQ…VGSGTFVSYD (69 aa). The segment at residues 50-69 is a DNA-binding region (H-T-H motif); sequence QRELADYLDLNVSTISKAFK. Position 308 is an N6-(pyridoxal phosphate)lysine (K308).

This sequence in the C-terminal section; belongs to the class-I pyridoxal-phosphate-dependent aminotransferase family. Requires pyridoxal 5'-phosphate as cofactor.

This is an uncharacterized protein from Bacillus subtilis (strain 168).